Reading from the N-terminus, the 89-residue chain is Acylphosphatase (89 aa).

The region spanning 3-89 (RKEFLVSGRV…DTREKRFSTY (87 aa)) is the Acylphosphatase-like domain. Active-site residues include arginine 18 and asparagine 36.

It belongs to the acylphosphatase family.

The catalysed reaction is an acyl phosphate + H2O = a carboxylate + phosphate + H(+). This is Acylphosphatase (acyP) from Clostridium perfringens (strain ATCC 13124 / DSM 756 / JCM 1290 / NCIMB 6125 / NCTC 8237 / Type A).